We begin with the raw amino-acid sequence, 280 residues long: Chaperone protein DnaJ 2 (280 aa).

A J domain is found at 6-70 (DYYAILGVPR…EKRRIYDTYG (65 aa)).

The protein belongs to the DnaJ family. As to quaternary structure, forms a heterononamer with DnaJ and DafA in the resting state. Three copies of each protein are present in the complex.

The protein localises to the cytoplasm. In terms of biological role, does not influence ATP binding or hydrolysis nor ADP release. Exerts influence on the interaction of DnaK with substrates; in the presence of DafA, DnaJ inhibits substrate binding, and substrate already bound to DnaK is displaced by DnaJ and DafA. In Thermus thermophilus (strain ATCC 27634 / DSM 579 / HB8), this protein is Chaperone protein DnaJ 2 (dnaJ2).